The primary structure comprises 121 residues: Chorion protein S15 (121 aa).

The N-terminal stretch at 1–18 is a signal peptide; sequence MKYLFVCVSLALFAYISA.

It belongs to the chorion protein S15/S18 family.

It localises to the secreted. Its function is as follows. Chorion membrane (egg shell) protein; plays a role in protecting the egg from the environment. The chain is Chorion protein S15 (Cp15) from Drosophila subobscura (Fruit fly).